Consider the following 331-residue polypeptide: Phosphatidylinositol transfer protein 4 (331 aa).

Belongs to the PtdIns transfer protein family. PI transfer class IIA subfamily.

Functionally, catalyzes the transfer of PtdIns and phosphatidylcholine between membranes. This chain is Phosphatidylinositol transfer protein 4 (pitD), found in Dictyostelium discoideum (Social amoeba).